A 485-amino-acid chain; its full sequence is Glutamyl-tRNA(Gln) amidotransferase subunit A (485 aa).

Active-site charge relay system residues include K78 and S153. S177 serves as the catalytic Acyl-ester intermediate.

It belongs to the amidase family. GatA subfamily. Heterotrimer of A, B and C subunits.

The catalysed reaction is L-glutamyl-tRNA(Gln) + L-glutamine + ATP + H2O = L-glutaminyl-tRNA(Gln) + L-glutamate + ADP + phosphate + H(+). In terms of biological role, allows the formation of correctly charged Gln-tRNA(Gln) through the transamidation of misacylated Glu-tRNA(Gln) in organisms which lack glutaminyl-tRNA synthetase. The reaction takes place in the presence of glutamine and ATP through an activated gamma-phospho-Glu-tRNA(Gln). In Bacillus cereus (strain Q1), this protein is Glutamyl-tRNA(Gln) amidotransferase subunit A.